A 360-amino-acid polypeptide reads, in one-letter code: Photosystem II protein D1 (360 aa).

3 consecutive transmembrane segments (helical) span residues 29–46 (YIGW…AATA), 118–133 (HFLL…QWEL), and 142–156 (WICV…SATA). A chlorophyll a-binding site is contributed by histidine 118. Tyrosine 126 contributes to the pheophytin a binding site. The [CaMn4O5] cluster site is built by aspartate 170 and glutamate 189. Residues 197–218 (FHMLGVAGVFGGSLFSAMHGSL) form a helical membrane-spanning segment. Histidine 198 lines the chlorophyll a pocket. Residues histidine 215 and 264–265 (SF) each bind a quinone. Histidine 215 provides a ligand contact to Fe cation. Position 272 (histidine 272) interacts with Fe cation. Residues 274 to 288 (FLAAWPVVGIWFTAL) traverse the membrane as a helical segment. Positions 332, 333, 342, and 344 each coordinate [CaMn4O5] cluster. A propeptide spanning residues 345 to 360 (AGEVAPVALTAPAING) is cleaved from the precursor.

The protein belongs to the reaction center PufL/M/PsbA/D family. As to quaternary structure, PSII is composed of 1 copy each of membrane proteins PsbA, PsbB, PsbC, PsbD, PsbE, PsbF, PsbH, PsbI, PsbJ, PsbK, PsbL, PsbM, PsbT, PsbX, PsbY, PsbZ, Psb30/Ycf12, peripheral proteins PsbO, CyanoQ (PsbQ), PsbU, PsbV and a large number of cofactors. It forms dimeric complexes. It depends on The D1/D2 heterodimer binds P680, chlorophylls that are the primary electron donor of PSII, and subsequent electron acceptors. It shares a non-heme iron and each subunit binds pheophytin, quinone, additional chlorophylls, carotenoids and lipids. D1 provides most of the ligands for the Mn4-Ca-O5 cluster of the oxygen-evolving complex (OEC). There is also a Cl(-1) ion associated with D1 and D2, which is required for oxygen evolution. The PSII complex binds additional chlorophylls, carotenoids and specific lipids. as a cofactor. Tyr-161 forms a radical intermediate that is referred to as redox-active TyrZ, YZ or Y-Z. In terms of processing, C-terminally processed by CtpA; processing is essential to allow assembly of the oxygen-evolving complex and thus photosynthetic growth.

It localises to the cellular thylakoid membrane. The catalysed reaction is 2 a plastoquinone + 4 hnu + 2 H2O = 2 a plastoquinol + O2. Functionally, photosystem II (PSII) is a light-driven water:plastoquinone oxidoreductase that uses light energy to abstract electrons from H(2)O, generating O(2) and a proton gradient subsequently used for ATP formation. It consists of a core antenna complex that captures photons, and an electron transfer chain that converts photonic excitation into a charge separation. The D1/D2 (PsbA/PsbD) reaction center heterodimer binds P680, the primary electron donor of PSII as well as several subsequent electron acceptors. This is Photosystem II protein D1 from Microchaete diplosiphon (Fremyella diplosiphon).